Consider the following 214-residue polypeptide: Transcription factor 23 (214 aa).

Disordered stretches follow at residues 1 to 86 and 174 to 214; these read MSQR…ARER and DSTT…LGDK. Residues 40-49 show a composition bias toward basic and acidic residues; that stretch reads TRQDPWEERS. The 53-residue stretch at 76-128 folds into the bHLH domain; it reads EASPENAARERSRVRTLRQAFLALQAALPAVPPDTKLSKLDVLVLAASYIAHL. Positions 174-183 are enriched in polar residues; sequence DSTTASTPSQ.

As to quaternary structure, forms inactive heterodimeric complexes with TCF3. Expressed in liver, kidney and spleen.

It is found in the nucleus. Inhibits E-box-mediated binding and transactivation of bHLH factors. Inhibitory effect is similar to that of ID proteins. Inhibits the formation of TCF3 and MYOD1 homodimers and heterodimers. Lacks DNA binding activity. Seems to play a role in the inhibition of myogenesis. The polypeptide is Transcription factor 23 (TCF23) (Homo sapiens (Human)).